Consider the following 792-residue polypeptide: Ubiquitin carboxyl-terminal hydrolase 10 (792 aa).

The segment at 2–27 is DHR2-binding module; that stretch reads TTQESIKPLVDRILSNPLQFNAAMIS. 2 disordered regions span residues 64 to 87 and 103 to 320; these read AESK…NTVP and KDAA…SITP. Positions 107–129 are enriched in low complexity; it reads DATGAKKSAELSTELSTEPPSSS. Residues 109–145 are SIR4-binding module; that stretch reads TGAKKSAELSTELSTEPPSSSSEDDKVGKEEEEEGEI. Residues 144–171 are compositionally biased toward basic and acidic residues; it reads EIFHEARDYVEPRKASLKERDNADKGDG. The UTP22-binding module stretch occupies residues 167–208; the sequence is DKGDGEDIGEDIGEDIGEDIGEDIGEDIGENLGSPLATIDDS. Over residues 172–195 the composition is skewed to acidic residues; that stretch reads EDIGEDIGEDIGEDIGEDIGEDIG. Residues 211–220 show a composition bias toward basic and acidic residues; sequence ENEKEKRKEL. Acidic residues predominate over residues 226 to 241; the sequence is SDDEIEDDEDEDDMDY. Residues 288–297 are compositionally biased toward polar residues; it reads VNNTKENGNR. Residues 362 to 733 form the USP domain; that stretch reads RGLLNHGVTC…NAYYLLYTRL (372 aa). The active-site Nucleophile is Cys-371. Residues 526 to 563 are disordered; the sequence is LDPNSDLSSDSINGTSATTSTTTSNAATKPSLSSSSSV. Residues 530 to 539 are compositionally biased toward polar residues; sequence SDLSSDSING. A compositionally biased stretch (low complexity) spans 540–563; that stretch reads TSATTSTTTSNAATKPSLSSSSSV. Residue His-691 is the Proton acceptor of the active site. Positions 749-766 are enriched in polar residues; it reads TGNVTSKSKQEQAVNEPN. Residues 749-792 are disordered; that stretch reads TGNVTSKSKQEQAVNEPNNRPLKINSKKNNRKKWKKNKKRKFTK. A compositionally biased stretch (basic residues) spans 773 to 792; it reads NSKKNNRKKWKKNKKRKFTK.

The protein belongs to the peptidase C19 family. Interacts with SIR4. Interacts with the proliferating-cell nuclear antigen PCNA/POL30. Interacts with DHR2 and UTP22.

The protein localises to the nucleus. Its subcellular location is the chromosome. It is found in the telomere. It localises to the nucleolus. The catalysed reaction is Thiol-dependent hydrolysis of ester, thioester, amide, peptide and isopeptide bonds formed by the C-terminal Gly of ubiquitin (a 76-residue protein attached to proteins as an intracellular targeting signal).. Functionally, deubiquitinating enzyme involved in telomere and HM loci silencing, which is the repression of chromatin structure which leads to a stop in the transcription of nearby genes. Targets histone H2B for deubiquitination, thus helping to localize SIR2 to the telomere. At silent chromatin, including telomeres and the rDNA locus, not only maintains low H2B 'Lys-123' ubiquitination (H2BK123Ub), but also low H3 'Lys-4' and 'Lys-79' methylation (H3K4me and H3K79me, respectively). Controls the proliferating-cell nuclear antigen PCNA/POL30 deubiquitination which is crucial for keeping TLS polymerases in check as well as for down-regulating the error-free bypass. Deubiquitinates and stabilizes RPA190, the largest subunit of RNA polymerase I, to achieve optimal levels of ribosomes and cell growth. Also protects nutrient transporters such as GAP1 from ubiquitin-dependent endocytosis. This chain is Ubiquitin carboxyl-terminal hydrolase 10 (UBP10), found in Saccharomyces cerevisiae (strain ATCC 204508 / S288c) (Baker's yeast).